The following is a 932-amino-acid chain: Protein translocase subunit SecA (932 aa).

ATP contacts are provided by residues Gln-86, 104–108 (GEGKT), and Asp-494. Positions 857-932 (EDAGAEAHAS…KPAPKRKKRR (76 aa)) are disordered. Residues 905–915 (TAGSAGDSNLP) show a composition bias toward polar residues. Positions 920 to 932 (KTNKPAPKRKKRR) are enriched in basic residues.

Belongs to the SecA family. Monomer and homodimer. Part of the essential Sec protein translocation apparatus which comprises SecA, SecYEG and auxiliary proteins SecDF. Other proteins may also be involved.

The protein resides in the cell membrane. It is found in the cytoplasm. The catalysed reaction is ATP + H2O + cellular proteinSide 1 = ADP + phosphate + cellular proteinSide 2.. In terms of biological role, part of the Sec protein translocase complex. Interacts with the SecYEG preprotein conducting channel. Has a central role in coupling the hydrolysis of ATP to the transfer of proteins into and across the cell membrane, serving as an ATP-driven molecular motor driving the stepwise translocation of polypeptide chains across the membrane. The sequence is that of Protein translocase subunit SecA from Renibacterium salmoninarum (strain ATCC 33209 / DSM 20767 / JCM 11484 / NBRC 15589 / NCIMB 2235).